A 128-amino-acid chain; its full sequence is MRYAIMVTGPAYGTQQASSALQFAHALLNEGHELASVFFYREGVYNANLLTSPASDEYDLVRVWQKLNTQHGVALNICVAAALRRGIIDETEAGRLELPSANLQPGFTLSGLGALAEASLTCDRVVQF.

Cys78 serves as the catalytic Cysteine persulfide intermediate.

It belongs to the DsrE/TusD family. As to quaternary structure, heterohexamer, formed by a dimer of trimers. The hexameric TusBCD complex contains 2 copies each of TusB, TusC and TusD. The TusBCD complex interacts with TusE.

The protein resides in the cytoplasm. Part of a sulfur-relay system required for 2-thiolation of 5-methylaminomethyl-2-thiouridine (mnm(5)s(2)U) at tRNA wobble positions. Accepts sulfur from TusA and transfers it in turn to TusE. This Salmonella typhi protein is Sulfurtransferase TusD.